The sequence spans 177 residues: MAELTTIARPYAKAAFDFAIEQDAVDSWAEMLTFAALVSENETMQPLLAGSLASTKLAALFISVCGEQVNVQGQNLIKVMAENGRLKVLPAVSQLFTEYRNEWAKEVEADVVSATELSSEQQQQISISLEKRLARKVKLNCSTDAALIAGVIIKTGDLVIDGSVRGKLSRLSDKLQS.

The protein belongs to the ATPase delta chain family. As to quaternary structure, F-type ATPases have 2 components, F(1) - the catalytic core - and F(0) - the membrane proton channel. F(1) has five subunits: alpha(3), beta(3), gamma(1), delta(1), epsilon(1). F(0) has three main subunits: a(1), b(2) and c(10-14). The alpha and beta chains form an alternating ring which encloses part of the gamma chain. F(1) is attached to F(0) by a central stalk formed by the gamma and epsilon chains, while a peripheral stalk is formed by the delta and b chains.

Its subcellular location is the cell inner membrane. Functionally, f(1)F(0) ATP synthase produces ATP from ADP in the presence of a proton or sodium gradient. F-type ATPases consist of two structural domains, F(1) containing the extramembraneous catalytic core and F(0) containing the membrane proton channel, linked together by a central stalk and a peripheral stalk. During catalysis, ATP synthesis in the catalytic domain of F(1) is coupled via a rotary mechanism of the central stalk subunits to proton translocation. This protein is part of the stalk that links CF(0) to CF(1). It either transmits conformational changes from CF(0) to CF(1) or is implicated in proton conduction. This Shewanella baltica (strain OS223) protein is ATP synthase subunit delta.